Consider the following 284-residue polypeptide: Sulfotransferase 2A6 (284 aa).

A 3'-phosphoadenylyl sulfate-binding site is contributed by 43 to 48; the sequence is KSGTNW. The active-site Proton acceptor is the histidine 98. 3'-phosphoadenylyl sulfate is bound by residues arginine 120, serine 128, tyrosine 183, 217–222, and 246–248; these read SSFQVM and RNG.

The protein belongs to the sulfotransferase 1 family. Oligomer. Liver, exhibiting a sex-dependent spatial localization in the lobule of the liver.

The protein resides in the cytoplasm. It localises to the cytosol. It catalyses the reaction an alcohol + 3'-phosphoadenylyl sulfate = an alkyl sulfate + adenosine 3',5'-bisphosphate + H(+). It carries out the reaction glycolithocholate + 3'-phosphoadenylyl sulfate = sulfoglycolithocholate + adenosine 3',5'-bisphosphate + H(+). The enzyme catalyses taurolithocholate + 3'-phosphoadenylyl sulfate = taurolithocholate 3-sulfate + adenosine 3',5'-bisphosphate + H(+). The catalysed reaction is 3beta-hydroxyandrost-5-en-17-one + 3'-phosphoadenylyl sulfate = dehydroepiandrosterone 3-sulfate + adenosine 3',5'-bisphosphate + H(+). It catalyses the reaction 3beta-hydroxy-5-cholenate + 3'-phosphoadenylyl sulfate = 3beta-sulfo-5-cholenate + adenosine 3',5'-bisphosphate + H(+). It carries out the reaction deoxycholate + 3'-phosphoadenylyl sulfate = 3alpha-sulfodeoxycholate + adenosine 3',5'-bisphosphate + H(+). The enzyme catalyses glycodeoxycholate + 3'-phosphoadenylyl sulfate = 3alpha-sulfoglycodeoxycholate + adenosine 3',5'-bisphosphate + H(+). The catalysed reaction is taurodeoxycholate + 3'-phosphoadenylyl sulfate = 3alpha-sulfotaurodeoxycholate + adenosine 3',5'-bisphosphate + H(+). In terms of biological role, sulfotransferase that utilizes 3'-phospho-5'-adenylyl sulfate (PAPS) as sulfonate donor to catalyze the sulfonation of the hydroxyl group of hydroxysteroids and bile acids. Prefered substrates are dehydroepiandrosterone (DHEA, also known as 3beta-hydroxyandrost-5-en-17-one) and 3beta-hydroxy-5-cholenoate, but can also catalyze deoxycholate and its conjugates, and lithocholate conjugates, in vitro. The polypeptide is Sulfotransferase 2A6 (Rattus norvegicus (Rat)).